The chain runs to 294 residues: Probable enoyl-CoA hydratase 2 (294 aa).

Residues 84–85, Lys113, 190–195, Gly213, and Phe243 contribute to the (3R)-3-hydroxydecanoyl-CoA site; these read HG and DLNPLH. Positions 165-269 constitute a MaoC-like domain; the sequence is DRAPDAISKQ…INPTTILFQS (105 aa). A Microbody targeting signal motif is present at residues 292-294; it reads GSL.

This sequence belongs to the short-chain dehydrogenases/reductases (SDR) family.

It is found in the peroxisome. The enzyme catalyses a (3R)-3-hydroxyacyl-CoA = a (2E)-enoyl-CoA + H2O. This chain is Probable enoyl-CoA hydratase 2 (mfeB), found in Dictyostelium discoideum (Social amoeba).